The following is a 913-amino-acid chain: SUN domain-containing protein 1 (913 aa).

The LMNA-binding stretch occupies residues 1-139; it reads MDFSRLHTYT…VLRHPVLDES (139 aa). Residues 1–415 are Nuclear-facing; the sequence is MDFSRLHTYT…LTRCLRNICK (415 aa). Phosphoserine occurs at positions 48 and 66. Residues 69-81 are compositionally biased toward polar residues; that stretch reads SQAIDSHISTSRA. The disordered stretch occupies residues 69–120; sequence SQAIDSHISTSRATPAKGRETRTVKQRRSASKPAFSINHLSGKGLSSSTSHD. Residues 108-120 show a composition bias toward low complexity; it reads LSGKGLSSSTSHD. At Ser-139 the chain carries Phosphoserine. An SYNE2-binding region spans residues 209-302; it reads SRVYSRDRTL…MTAGELSRVD (94 aa). The EMD-binding stretch occupies residues 223 to 302; that stretch reads VSFYLDRTLW…MTAGELSRVD (80 aa). The chain crosses the membrane as a helical span at residues 416–436; it reads VFVLLLPLLLLLGAGVSLWGQ. The Perinuclear space portion of the chain corresponds to 437–913; it reads GNFFSLLPVL…RFRVHGEPIQ (477 aa). The disordered stretch occupies residues 456 to 485; that stretch reads RVDDSKGMHRPGPLPPSPPPKVDHKASQWP. Coiled-coil stretches lie at residues 491 to 533 and 563 to 638; these read GQKV…EGLS and HHDH…CEQA. The interval 703–913 is sufficient for interaction with SYNE1 and SYNE2; sequence TSEAIVSAVN…RFRVHGEPIQ (211 aa). In terms of domain architecture, SUN spans 751–912; that stretch reads GGSILSTRCS…YRFRVHGEPI (162 aa).

Core component of the LINC complex which is composed of inner nuclear membrane SUN domain-containing proteins coupled to outer nuclear membrane KASH domain-containing nesprins. SUN and KASH domain-containing proteins seem to bind each other promiscuously; however, differentially expression of LINC complex constituents is giving rise to specific assemblies. At least SUN1/2-containing core LINC complexes are proposed to be hexameric composed of three protomers of each KASH and SUN domain-containing protein. Interacts with KASH5 (via the last 22 amino acids); this interaction mediates KASH5 telomere localization by forming a SUN1:KASH5 LINC complex. Isoform 5 is proposed to form a non-nuclear spermatogenesis-specific LINC complex with SYNE3 during sperm head formation. Interacts with SYNE2 and SYNE1; probably forming respective LINC complexes. Interacts with A-type lamin with a strong preference for unprocessed A-type lamin compared with the mature protein. Interaction with lamins B1 and C is hardly detectable. Interacts with NAT10. Interacts with EMD and TSNAX. Associates with the nuclear pore complex (NPC). Interacts with CCDC79/TERB1; promoting the accumulation of the LINC complex complexes at the telomere-nuclear envelope attachment sites. Interacts with IRAG2. Interacts (via KASH domain) with TMEM258. In terms of processing, the disulfide bond with KASH domain-containing nesprins is required for stability of the respective LINC complexes under tensile forces. Widely expressed. Expressed in cochlear outer hair cells (at protein level). Seven isoforms are expressed in testis including testis-specific isoform 5. Isoform 5 is the only isoform expressed at the end of sperm differentiation. Six isoforms are expressed in muscle, heart and brain, four isoforms in kidney and three isoforms in liver.

Its subcellular location is the nucleus inner membrane. The protein localises to the cytoplasmic vesicle. The protein resides in the secretory vesicle. It is found in the acrosome outer membrane. Its function is as follows. As a component of the LINC (LInker of Nucleoskeleton and Cytoskeleton) complex involved in the connection between the nuclear lamina and the cytoskeleton. The nucleocytoplasmic interactions established by the LINC complex play an important role in the transmission of mechanical forces across the nuclear envelope and in nuclear movement and positioning. Required for interkinetic nuclear migration (INM) and essential for nucleokinesis and centrosome-nucleus coupling during radial neuronal migration in the cerebral cortex and during glial migration. Involved in telomere attachment to nuclear envelope in the prophase of meiosis implicating a SUN1/2:KASH5 LINC complex in which SUN1 and SUN2 seem to act at least partial redundantly. Required for gametogenesis and involved in selective gene expression of coding and non-coding RNAs needed for gametogenesis. Helps to define the distribution of nuclear pore complexes (NPCs). Required for efficient localization of SYNE4 in the nuclear envelope. May be involved in nuclear remodeling during sperm head formation in spermatogenesis. May play a role in DNA repair by suppressing non-homologous end joining repair to facilitate the repair of DNA cross-links. Isoform 5 may be involved in nuclear remodeling during sperm head formation in spermatogenesis. A probable SUN1 isoform 5:SYNE3 LINC complex may tether spermatid nuclei to anterior cytoskeletal structures such as actin filaments present at membraneous junctions of spermatids and Sertoli cells. In Mus musculus (Mouse), this protein is SUN domain-containing protein 1.